We begin with the raw amino-acid sequence, 151 residues long: DNA-directed RNA polymerase RPB6 homolog (151 aa).

Over residues 20–44 (ETEEENFVDSEEESEDKSEDKDEIV) the composition is skewed to acidic residues. The segment at 20 to 46 (ETEEENFVDSEEESEDKSEDKDEIVES) is disordered.

It belongs to the archaeal RpoK/eukaryotic RPB6 RNA polymerase subunit family. As to quaternary structure, part of the viral DNA-directed RNA polymerase that consists of 8 polII-like subunits (RPB1, RPB2, RPB3, RPB5, RPB6, RPB7, RPB9, RPB10), a capping enzyme and a termination factor.

It localises to the host cytoplasm. It is found in the virion. Its function is as follows. Component of the DNA-directed RNA polymerase (RNAP) that catalyzes the transcription in the cytoplasm of viral DNA into RNA using the four ribonucleoside triphosphates as substrates. The sequence is that of DNA-directed RNA polymerase RPB6 homolog from African swine fever virus (isolate Tick/Malawi/Lil 20-1/1983) (ASFV).